Consider the following 249-residue polypeptide: Large ribosomal subunit protein uL30A (249 aa).

This sequence belongs to the universal ribosomal protein uL30 family. In terms of assembly, component of the small ribosomal subunit (SSU). Mature yeast ribosomes consist of a small (40S) and a large (60S) subunit. The 40S small subunit contains 1 molecule of ribosomal RNA (18S rRNA) and at least 33 different proteins. The large 60S subunit contains 3 rRNA molecules (25S, 5.8S and 5S rRNA) and at least 46 different proteins.

The protein localises to the cytoplasm. The protein resides in the nucleus. Its subcellular location is the nucleolus. Component of the ribosome, a large ribonucleoprotein complex responsible for the synthesis of proteins in the cell. The small ribosomal subunit (SSU) binds messenger RNAs (mRNAs) and translates the encoded message by selecting cognate aminoacyl-transfer RNA (tRNA) molecules. The large subunit (LSU) contains the ribosomal catalytic site termed the peptidyl transferase center (PTC), which catalyzes the formation of peptide bonds, thereby polymerizing the amino acids delivered by tRNAs into a polypeptide chain. The nascent polypeptides leave the ribosome through a tunnel in the LSU and interact with protein factors that function in enzymatic processing, targeting, and the membrane insertion of nascent chains at the exit of the ribosomal tunnel. The polypeptide is Large ribosomal subunit protein uL30A (rlp7) (Schizosaccharomyces pombe (strain 972 / ATCC 24843) (Fission yeast)).